The following is a 325-amino-acid chain: uncharacterized protein (325 aa).

The segment at Met-1–Gln-75 is disordered. Positions Tyr-24–Tyr-70 are enriched in pro residues. The next 4 helical transmembrane spans lie at Ala-96–Ala-116, Ile-153–Ile-173, Leu-205–Phe-225, and Leu-273–Ile-293.

The protein localises to the cell membrane. This is an uncharacterized protein from Mycobacterium tuberculosis (strain ATCC 25618 / H37Rv).